The chain runs to 839 residues: Protein translocase subunit SecA (839 aa).

ATP is bound by residues glutamine 86, glycine 104–threonine 108, and aspartate 493. Residues glycine 794 to glutamine 839 form a disordered region. The segment covering aspartate 807–lysine 833 has biased composition (basic and acidic residues).

It belongs to the SecA family. In terms of assembly, monomer and homodimer. Part of the essential Sec protein translocation apparatus which comprises SecA, SecYEG and auxiliary proteins SecDF. Other proteins may also be involved.

It localises to the cell membrane. Its subcellular location is the cytoplasm. The enzyme catalyses ATP + H2O + cellular proteinSide 1 = ADP + phosphate + cellular proteinSide 2.. Its function is as follows. Part of the Sec protein translocase complex. Interacts with the SecYEG preprotein conducting channel. Has a central role in coupling the hydrolysis of ATP to the transfer of proteins into and across the cell membrane, serving as an ATP-driven molecular motor driving the stepwise translocation of polypeptide chains across the membrane. The polypeptide is Protein translocase subunit SecA (Brevibacillus brevis (strain 47 / JCM 6285 / NBRC 100599)).